Here is a 325-residue protein sequence, read N- to C-terminus: Lipoyl synthase (325 aa).

7 residues coordinate [4Fe-4S] cluster: cysteine 71, cysteine 76, cysteine 82, cysteine 97, cysteine 101, cysteine 104, and serine 311. The Radical SAM core domain maps to 83–300 (FSGGTATFMI…ERQALAMGFT (218 aa)).

This sequence belongs to the radical SAM superfamily. Lipoyl synthase family. The cofactor is [4Fe-4S] cluster.

Its subcellular location is the cytoplasm. It carries out the reaction [[Fe-S] cluster scaffold protein carrying a second [4Fe-4S](2+) cluster] + N(6)-octanoyl-L-lysyl-[protein] + 2 oxidized [2Fe-2S]-[ferredoxin] + 2 S-adenosyl-L-methionine + 4 H(+) = [[Fe-S] cluster scaffold protein] + N(6)-[(R)-dihydrolipoyl]-L-lysyl-[protein] + 4 Fe(3+) + 2 hydrogen sulfide + 2 5'-deoxyadenosine + 2 L-methionine + 2 reduced [2Fe-2S]-[ferredoxin]. The protein operates within protein modification; protein lipoylation via endogenous pathway; protein N(6)-(lipoyl)lysine from octanoyl-[acyl-carrier-protein]: step 2/2. In terms of biological role, catalyzes the radical-mediated insertion of two sulfur atoms into the C-6 and C-8 positions of the octanoyl moiety bound to the lipoyl domains of lipoate-dependent enzymes, thereby converting the octanoylated domains into lipoylated derivatives. In Methylobacillus flagellatus (strain ATCC 51484 / DSM 6875 / VKM B-1610 / KT), this protein is Lipoyl synthase.